The following is an 86-amino-acid chain: High affinity immunoglobulin epsilon receptor subunit gamma (86 aa).

The first 18 residues, 1–18 (MIPAVILFLLLLVEEAAA), serve as a signal peptide directing secretion. Over 19-23 (LGEPQ) the chain is Extracellular. Residues 24-44 (LCYILDAILFLYGIVLTLLYC) traverse the membrane as a helical segment. Residues 45 to 86 (RLKIQVRKADIASREKSDAVYTGLNTRNQETYETLKHEKPPQ) lie on the Cytoplasmic side of the membrane. An ITAM domain is found at 54 to 82 (DIASREKSDAVYTGLNTRNQETYETLKHE). Residues Tyr-65 and Tyr-76 each carry the phosphotyrosine modification. Thr-78 is modified (phosphothreonine).

The protein belongs to the CD3Z/FCER1G family. As to quaternary structure, igE Fc receptor is a tetramer of an alpha chain, a beta chain, and two disulfide linked gamma chains. Associates with FCGR1A to form a functional receptor complex. The signaling subunit of immunoglobulin gamma (IgG) Fc receptor complex. As a homodimer or a heterodimer of CD247 and FCER1G, associates with the ligand binding subunit FCGR3A to form a functional receptor complex. Associates with CLEC6A. Interacts with CLEC4E. Interacts (via ITAM domain) with SYK (via SH2 domains); activates SYK, enabling integrin-mediated activation of neutrophils and macrophages. Interacts with common beta chain of interleukin 3 receptor CSF2RB and recruits SYK in response to IL3 stimulation; this interaction is direct. Interacts with CD300LH; the interaction may be indirect. Interacts with CD300LD. Interacts with TARM1. Expressed in leukocytes and pinealocytes. Expression in the pineal gland does not undergo circadian variations.

The protein localises to the cell membrane. Adapter protein containing an immunoreceptor tyrosine-based activation motif (ITAM) that transduces activation signals from various immunoreceptors. As a component of the high-affinity immunoglobulin E (IgE) receptor, mediates allergic inflammatory signaling in mast cells. As a constitutive component of interleukin-3 receptor complex, selectively mediates interleukin 4/IL4 production by basophils priming T-cells toward effector T-helper 2 subset. Associates with pattern recognition receptors CLEC4D and CLEC4E to form a functional signaling complex in myeloid cells. Binding of mycobacterial trehalose 6,6'-dimycolate (TDM) to this receptor complex leads to phosphorylation of ITAM, triggering activation of SYK, CARD9 and NF-kappa-B, consequently driving maturation of antigen-presenting cells and shaping antigen-specific priming of T-cells toward effector T-helper 1 and T-helper 17 cell subtypes. May function cooperatively with other activating receptors. Functionally linked to integrin beta-2/ITGB2-mediated neutrophil activation. Also involved in integrin alpha-2/ITGA2-mediated platelet activation. The sequence is that of High affinity immunoglobulin epsilon receptor subunit gamma (Fcer1g) from Rattus norvegicus (Rat).